A 21-amino-acid chain; its full sequence is Endo-1,4-beta-xylanase A (21 aa).

This sequence belongs to the glycosyl hydrolase 10 (cellulase F) family.

The enzyme catalyses Endohydrolysis of (1-&gt;4)-beta-D-xylosidic linkages in xylans.. It functions in the pathway glycan degradation; xylan degradation. In Dictyoglomus sp. (strain B4A), this protein is Endo-1,4-beta-xylanase A.